The chain runs to 494 residues: Calmodulin-binding protein 60 A (494 aa).

Positions methionine 1 to glutamate 62 are calmodulin-binding. The tract at residues valine 132–asparagine 252 is DNA-binding.

Belongs to the plant ACBP60 protein family. As to quaternary structure, interacts with calmodulin (CaM). Expressed in stems, flowers and root.

It is found in the nucleus. Its function is as follows. Transcription activator that binds DNA in a sequence-specific manner, likely 5'-GAAATTTTGG-3', to promote the expression of target genes. The polypeptide is Calmodulin-binding protein 60 A (Arabidopsis thaliana (Mouse-ear cress)).